The sequence spans 230 residues: Cell division ATP-binding protein FtsE (230 aa).

Residues 3–228 (ITLDHVTKQY…RDEQRGVYGM (226 aa)) enclose the ABC transporter domain. 37 to 44 (GPSGSGKS) serves as a coordination point for ATP.

This sequence belongs to the ABC transporter superfamily. Homodimer. Forms a membrane-associated complex with FtsX.

It localises to the cell membrane. In terms of biological role, part of the ABC transporter FtsEX involved in cellular division. Has ATPase activity. In Mycobacterium tuberculosis (strain ATCC 25618 / H37Rv), this protein is Cell division ATP-binding protein FtsE.